Reading from the N-terminus, the 349-residue chain is DNA integrity scanning protein DisA (349 aa).

Positions 3–143 constitute a DAC domain; that stretch reads KQDLMDIIVK…LKYRLKNFDE (141 aa). Residues glycine 70, valine 88, and 101-105 contribute to the ATP site; that span reads TRHRT.

This sequence belongs to the DisA family. In terms of assembly, homooctamer. Mg(2+) serves as cofactor.

The enzyme catalyses 2 ATP = 3',3'-c-di-AMP + 2 diphosphate. Functionally, participates in a DNA-damage check-point. DisA forms globular foci that rapidly scan along the chromosomes searching for lesions. Also has diadenylate cyclase activity, catalyzing the condensation of 2 ATP molecules into cyclic di-AMP (c-di-AMP). c-di-AMP likely acts as a signaling molecule that may couple DNA integrity with a cellular process. In Fusobacterium nucleatum subsp. nucleatum (strain ATCC 25586 / DSM 15643 / BCRC 10681 / CIP 101130 / JCM 8532 / KCTC 2640 / LMG 13131 / VPI 4355), this protein is DNA integrity scanning protein DisA.